The chain runs to 116 residues: UPF0499 protein ATEG_06693 (116 aa).

The signal sequence occupies residues 1 to 18; that stretch reads MKLTGLLSLALLTTLALA. Disulfide bonds link cysteine 32–cysteine 46, cysteine 36–cysteine 49, and cysteine 42–cysteine 54.

It belongs to the UPF0499 family.

The protein resides in the secreted. This Aspergillus terreus (strain NIH 2624 / FGSC A1156) protein is UPF0499 protein ATEG_06693.